The following is a 435-amino-acid chain: Methionine aminopeptidase 2 (435 aa).

Residues Met-1–Val-87 are disordered. A compositionally biased stretch (basic and acidic residues) spans Ala-10–Ser-19. Polar residues predominate over residues Lys-20 to Gly-29. The span at Glu-32 to Ala-46 shows a compositional bias: acidic residues. Residues Lys-55–Ala-68 show a composition bias toward basic residues. His-199 provides a ligand contact to substrate. A divalent metal cation is bound by residues Asp-219, Asp-230, and His-299. His-307 serves as a coordination point for substrate. Positions 332 and 427 each coordinate a divalent metal cation.

This sequence belongs to the peptidase M24A family. Methionine aminopeptidase eukaryotic type 2 subfamily. The cofactor is Co(2+). Requires Zn(2+) as cofactor. It depends on Mn(2+) as a cofactor. Fe(2+) serves as cofactor.

It localises to the cytoplasm. It carries out the reaction Release of N-terminal amino acids, preferentially methionine, from peptides and arylamides.. In terms of biological role, cotranslationally removes the N-terminal methionine from nascent proteins. The N-terminal methionine is often cleaved when the second residue in the primary sequence is small and uncharged (Met-Ala-, Cys, Gly, Pro, Ser, Thr, or Val). The protein is Methionine aminopeptidase 2 of Phaeosphaeria nodorum (strain SN15 / ATCC MYA-4574 / FGSC 10173) (Glume blotch fungus).